Consider the following 231-residue polypeptide: Protein OPG061 (231 aa).

The protein belongs to the orthopoxvirus OPG058 family.

Its subcellular location is the host nucleus. It is found in the host nucleolus. The protein is Protein OPG061 (OPG061) of Vaccinia virus (strain L-IVP) (VACV).